The chain runs to 580 residues: Glutamyl-tRNA(Gln) amidotransferase subunit B-2, chloroplastic/mitochondrial (580 aa).

2 stretches are compositionally biased toward low complexity: residues 20–35 (RRDATAAASTSAATVS) and 42–59 (AVSTTTTTSSSSSSSAAV). The segment at 20-64 (RRDATAAASTSAATVSRGRRARAVSTTTTTSSSSSSSAAVDARDA) is disordered.

This sequence belongs to the GatB/GatE family. GatB subfamily. Subunit of the heterotrimeric GatCAB amidotransferase (AdT) complex, composed of A, B and C subunits.

It is found in the mitochondrion. Its subcellular location is the plastid. The protein resides in the chloroplast. The catalysed reaction is L-glutamyl-tRNA(Gln) + L-glutamine + ATP + H2O = L-glutaminyl-tRNA(Gln) + L-glutamate + ADP + phosphate + H(+). Its function is as follows. Allows the formation of correctly charged Gln-tRNA(Gln) through the transamidation of misacylated Glu-tRNA(Gln) in chloroplasts and mitochondria. The reaction takes place in the presence of glutamine and ATP through an activated gamma-phospho-Glu-tRNA(Gln). This chain is Glutamyl-tRNA(Gln) amidotransferase subunit B-2, chloroplastic/mitochondrial, found in Micromonas pusilla (strain CCMP1545) (Picoplanktonic green alga).